Here is a 316-residue protein sequence, read N- to C-terminus: Transaldolase 2 (316 aa).

The Schiff-base intermediate with substrate role is filled by Lys-131.

Belongs to the transaldolase family. Type 1 subfamily. Homodimer.

It localises to the cytoplasm. The catalysed reaction is D-sedoheptulose 7-phosphate + D-glyceraldehyde 3-phosphate = D-erythrose 4-phosphate + beta-D-fructose 6-phosphate. The protein operates within carbohydrate degradation; pentose phosphate pathway; D-glyceraldehyde 3-phosphate and beta-D-fructose 6-phosphate from D-ribose 5-phosphate and D-xylulose 5-phosphate (non-oxidative stage): step 2/3. Functionally, transaldolase is important for the balance of metabolites in the pentose-phosphate pathway. The polypeptide is Transaldolase 2 (Salmonella choleraesuis (strain SC-B67)).